A 240-amino-acid polypeptide reads, in one-letter code: Protein unc-119 homolog A (240 aa).

Positions 1-12 are enriched in gly residues; the sequence is MKVKKGGGGTGP. Residues 1-62 are disordered; the sequence is MKVKKGGGGT…PLQGKQPIGP (62 aa). Phosphoserine; by CK2 occurs at positions 37, 39, and 41. Tyrosine 131 serves as a coordination point for tetradecanoate.

It belongs to the PDE6D/unc-119 family. In terms of assembly, interacts with CABP4; in the absence of calcium. May interact with GTP-bound ARL1. Interacts with ARL2 and ARL3 (GTP-bound forms); this promotes the release of myristoylated cargo proteins. Found in a complex with ARL3, RP2 and UNC119; RP2 induces hydrolysis of GTP ARL3 in the complex, leading to the release of UNC119. Interacts with NPHP3 (when myristoylated). Interacts with CYS1 (when myristoylated). Interacts with MACIR; interaction only takes place when UNC119 is not liganded with myristoylated proteins. Interacts with ARL1 and ARL3 GTP-bound forms. Interacts with ARL2. Interacts with ARL2. Interacts with LCK; this interaction plays a crucial role in activation of LCK. Interacts with FYN. Interacts with RAB11A; in a cell cycle-dependent manner. Interacts with LYN (via SH2 and SH3 domains); leading to LYN activation. Interacts with DNM1; leading to a decrease of DNM1 GTPase activity. Found in a complex with ABL1, ABL2, CRK and UNC119; leading to the inhibition of CRK phosphorylation by ABL kinases. Interacts with CD44. Interacts with KLHL18 (via kelch repeats). Interacts with PPP3CA, PPP3CB and PPP3CC. Interacts with USP48; this interaction promotes UNC119 stability. Phosphorylation suppresses its interaction with KLHL18 and down-regulates its KLHL18-mediated degradation. Phosphorylated more under light conditions than dark conditions. Dephosphorylated by calcineurin.

Its subcellular location is the cytoplasm. It is found in the cytoskeleton. The protein localises to the microtubule organizing center. It localises to the centrosome. The protein resides in the spindle. Its subcellular location is the spindle pole. In terms of biological role, involved in synaptic functions in photoreceptor cells, the signal transduction in immune cells as a Src family kinase activator, endosome recycling, the uptake of bacteria and endocytosis, protein trafficking in sensory neurons and as lipid-binding chaperone with specificity for a diverse subset of myristoylated proteins. Specifically binds the myristoyl moiety of a subset of N-terminally myristoylated proteins and is required for their localization. Binds myristoylated GNAT1 and is required for G-protein localization and trafficking in sensory neurons. Probably plays a role in trafficking proteins in photoreceptor cells. Plays important roles in mediating Src family kinase signals for the completion of cytokinesis via RAB11A. This chain is Protein unc-119 homolog A (Unc119), found in Rattus norvegicus (Rat).